Reading from the N-terminus, the 154-residue chain is UPF0178 protein H16_B0290 (154 aa).

It belongs to the UPF0178 family.

The polypeptide is UPF0178 protein H16_B0290 (Cupriavidus necator (strain ATCC 17699 / DSM 428 / KCTC 22496 / NCIMB 10442 / H16 / Stanier 337) (Ralstonia eutropha)).